The sequence spans 378 residues: 3-hydroxyisobutyryl-CoA hydrolase 1 (378 aa).

Position 2 is an N-acetylalanine (A2). E94, G119, E142, and D150 together coordinate substrate.

The protein belongs to the enoyl-CoA hydratase/isomerase family. In terms of tissue distribution, expressed in roots, leaves, flowers and siliques.

The protein localises to the peroxisome. It carries out the reaction 3-hydroxy-2-methylpropanoyl-CoA + H2O = 3-hydroxy-2-methylpropanoate + CoA + H(+). Its pathway is amino-acid degradation; L-valine degradation. Inhibited by copper. In terms of biological role, involved in valine catabolism. May be indirectly involved in benzoic acid biosynthesis and in cold signaling and cold tolerance. This Arabidopsis thaliana (Mouse-ear cress) protein is 3-hydroxyisobutyryl-CoA hydrolase 1 (CHY1).